A 627-amino-acid chain; its full sequence is uncharacterized protein (627 aa).

Over residues 1-20 (MAKFKKDLTTKNKDTDRLSE) the composition is skewed to basic and acidic residues. 2 disordered regions span residues 1–22 (MAKF…SEEI) and 578–606 (LSLG…LLPV). A compositionally biased stretch (acidic residues) spans 582 to 592 (SEEEQGQEETE).

This is an uncharacterized protein from Rickettsia prowazekii (strain Madrid E).